Reading from the N-terminus, the 441-residue chain is Serine--tRNA ligase (441 aa).

250-252 is an L-serine binding site; the sequence is TSE. Residues 281 to 283 and Val297 contribute to the ATP site; that span reads RRE. L-serine is bound at residue Glu304. Residue 368 to 371 participates in ATP binding; it reads EIVS. Position 402 (Thr402) interacts with L-serine.

The protein belongs to the class-II aminoacyl-tRNA synthetase family. Type-1 seryl-tRNA synthetase subfamily. As to quaternary structure, homodimer. The tRNA molecule binds across the dimer.

Its subcellular location is the cytoplasm. It carries out the reaction tRNA(Ser) + L-serine + ATP = L-seryl-tRNA(Ser) + AMP + diphosphate + H(+). The catalysed reaction is tRNA(Sec) + L-serine + ATP = L-seryl-tRNA(Sec) + AMP + diphosphate + H(+). It functions in the pathway aminoacyl-tRNA biosynthesis; selenocysteinyl-tRNA(Sec) biosynthesis; L-seryl-tRNA(Sec) from L-serine and tRNA(Sec): step 1/1. Its function is as follows. Catalyzes the attachment of serine to tRNA(Ser). Is also able to aminoacylate tRNA(Sec) with serine, to form the misacylated tRNA L-seryl-tRNA(Sec), which will be further converted into selenocysteinyl-tRNA(Sec). The protein is Serine--tRNA ligase of Thermoplasma acidophilum (strain ATCC 25905 / DSM 1728 / JCM 9062 / NBRC 15155 / AMRC-C165).